A 583-amino-acid chain; its full sequence is 5-aminolevulinate synthase, erythroid-specific, mitochondrial (583 aa).

Residue Arg158 participates in succinyl-CoA binding. 2 residues coordinate pyridoxal 5'-phosphate: Cys253 and Phe254. Residues Ser275 and Arg294 each contribute to the succinyl-CoA site. Pyridoxal 5'-phosphate is bound by residues Ser327, His355, and Thr383. The active site involves Lys386. Lys386 carries the N6-(pyridoxal phosphate)lysine modification. 2 residues coordinate pyridoxal 5'-phosphate: Thr415 and Thr416. Thr503 is a binding site for succinyl-CoA.

It belongs to the class-II pyridoxal-phosphate-dependent aminotransferase family. As to quaternary structure, homodimer. Pyridoxal 5'-phosphate is required as a cofactor.

The protein resides in the mitochondrion inner membrane. The catalysed reaction is succinyl-CoA + glycine + H(+) = 5-aminolevulinate + CO2 + CoA. It participates in porphyrin-containing compound metabolism; protoporphyrin-IX biosynthesis; 5-aminolevulinate from glycine: step 1/1. Functionally, catalyzes the pyridoxal 5'-phosphate (PLP)-dependent condensation of succinyl-CoA and glycine to form aminolevulinic acid (ALA), with CoA and CO2 as by-products. Contributes significantly to heme formation during erythropoiesis. The polypeptide is 5-aminolevulinate synthase, erythroid-specific, mitochondrial (alas2) (Danio rerio (Zebrafish)).